The chain runs to 454 residues: Jacalin-related lectin 37 (454 aa).

Residues 295-438 form the Jacalin-type lectin domain; it reads SRFTPPRGIQ…LTALGVHFSP (144 aa).

Belongs to the jacalin lectin family.

The chain is Jacalin-related lectin 37 (JAL37) from Arabidopsis thaliana (Mouse-ear cress).